We begin with the raw amino-acid sequence, 101 residues long: Ubiquitin-related modifier 1 (101 aa).

The residue at position 101 (Gly101) is a 1-thioglycine. Residue Gly101 forms a Glycyl lysine isopeptide (Gly-Lys) (interchain with K-? in acceptor proteins) linkage.

Belongs to the URM1 family. In terms of assembly, component of a complex at least composed of URM1, CTU2/NCS2 and CTU1/ATPBD3. In terms of processing, C-terminal thiocarboxylation occurs in 2 steps, it is first acyl-adenylated (-COAMP) via the hesA/moeB/thiF part of MOCS3, then thiocarboxylated (-COSH) via the rhodanese domain of MOCS3.

It is found in the cytoplasm. It functions in the pathway tRNA modification; 5-methoxycarbonylmethyl-2-thiouridine-tRNA biosynthesis. Its function is as follows. Acts as a sulfur carrier required for 2-thiolation of mcm(5)S(2)U at tRNA wobble positions of cytosolic tRNA(Lys), tRNA(Glu) and tRNA(Gln). Serves as sulfur donor in tRNA 2-thiolation reaction by being thiocarboxylated (-COSH) at its C-terminus by MOCS3. The sulfur is then transferred to tRNA to form 2-thiolation of mcm(5)S(2)U. Also acts as a ubiquitin-like protein (UBL) that is covalently conjugated via an isopeptide bond to lysine residues of target proteins such as MOCS3, ATPBD3, CTU2, USP15 and CAS. The thiocarboxylated form serves as substrate for conjugation and oxidative stress specifically induces the formation of UBL-protein conjugates. The chain is Ubiquitin-related modifier 1 from Homo sapiens (Human).